The sequence spans 312 residues: Acetylglutamate kinase (312 aa).

Substrate contacts are provided by residues 69–70 (GG), Arg91, and Asn191.

This sequence belongs to the acetylglutamate kinase family. ArgB subfamily.

The protein localises to the cytoplasm. It carries out the reaction N-acetyl-L-glutamate + ATP = N-acetyl-L-glutamyl 5-phosphate + ADP. It functions in the pathway amino-acid biosynthesis; L-arginine biosynthesis; N(2)-acetyl-L-ornithine from L-glutamate: step 2/4. In terms of biological role, catalyzes the ATP-dependent phosphorylation of N-acetyl-L-glutamate. The polypeptide is Acetylglutamate kinase (Streptomyces griseus subsp. griseus (strain JCM 4626 / CBS 651.72 / NBRC 13350 / KCC S-0626 / ISP 5235)).